Consider the following 389-residue polypeptide: Lipid-A-disaccharide synthase (389 aa).

The protein belongs to the LpxB family.

The catalysed reaction is a lipid X + a UDP-2-N,3-O-bis[(3R)-3-hydroxyacyl]-alpha-D-glucosamine = a lipid A disaccharide + UDP + H(+). It participates in bacterial outer membrane biogenesis; LPS lipid A biosynthesis. Functionally, condensation of UDP-2,3-diacylglucosamine and 2,3-diacylglucosamine-1-phosphate to form lipid A disaccharide, a precursor of lipid A, a phosphorylated glycolipid that anchors the lipopolysaccharide to the outer membrane of the cell. In Burkholderia ambifaria (strain MC40-6), this protein is Lipid-A-disaccharide synthase.